The chain runs to 139 residues: D-ribose pyranase (139 aa).

The Proton donor role is filled by His20. Residues Asp28, His106, and 128-130 contribute to the substrate site; that span reads YAN.

This sequence belongs to the RbsD / FucU family. RbsD subfamily. In terms of assembly, homodecamer.

It localises to the cytoplasm. It carries out the reaction beta-D-ribopyranose = beta-D-ribofuranose. The protein operates within carbohydrate metabolism; D-ribose degradation; D-ribose 5-phosphate from beta-D-ribopyranose: step 1/2. Catalyzes the interconversion of beta-pyran and beta-furan forms of D-ribose. The sequence is that of D-ribose pyranase from Pasteurella multocida (strain Pm70).